The chain runs to 385 residues: Elsinochromes biosynthesis cluster protein HP2 (385 aa).

The signal sequence occupies residues 1–22; sequence MVLLYILIMVALIPMYMTVVQD. A run of 2 helical transmembrane segments spans residues 94-114 and 148-168; these read TVLS…SMFD and FYGQ…IVLW. N-linked (GlcNAc...) asparagine glycosylation is present at Asn-187. The chain crosses the membrane as a helical span at residues 209–229; it reads SWTFGQIVPIVLLVSPLVAAF. N-linked (GlcNAc...) asparagine glycosylation occurs at Asn-248. 2 helical membrane passes run 309 to 329 and 344 to 364; these read AILF…LPLA and YYAF…AVPF.

The protein localises to the membrane. Part of the gene cluster that mediates the biosynthesis of elsinochromes, pigments consisting of at least four interconvertible tautomers (A, B, C and D) that have a core phenolic quinone to which various side chains are attached and which play an important role in fungal pathogenesis. The non-reducing polyketide synthase PKS1 was proposed to iteratively catalyze decarboxylation between acetyl-CoA and malonyl-CoA subunits for polyketide chain elongation. The released polyketide undergoes cyclization to form an aromatic ring, and proceeds via serial modification steps to produce the heptaketide back- bone of elsinochrome. As elsinochrome has a symmetrical structure, two identical heptaketides are fused to form a core 1,2-dihydrobenzo-perylene ring structure, which can then be successively modified to produce the various derivatives of elsinochrome. Some of these reactions may be cooperatively carried out, at least in part, by the products of RDT1, OXR1 and PKS1. PRF1, embedded within the elsinochrome cluster possibly functions to stabilize some of the biosynthetic enzymes required for elsinochrome production. As prefoldin is a hexamer containing 2 a and 4 b subunits, additional prefoldin subunits, whose coding genes may not immediately link to the elsinochrome biosynthetic gene cluster, are required to fulfill the chaperone function. In addition, no methyltransferase-coding gene exists within the biosynthetic gene cluster, even though elsinochrome has four methyl groups at positions C3, C7, C8 and C12. Apparently, the identified gene cluster does not contain the entire entourage of genes responsible for elsinochrome biosynthesis. Once elsinochrome is synthesized, it must be exported outside the fungal cells, which is probably accomplished by the ECT1 transporter, to avoid toxicity. The chain is Elsinochromes biosynthesis cluster protein HP2 from Elsinoe fawcettii (Citrus scab fungus).